The following is a 622-amino-acid chain: Peptidoglycan O-acetyltransferase OatA (622 aa).

11 helical membrane passes run 11-31 (YVPS…AYHL), 39-59 (GFIG…NILL), 81-101 (LIPA…FFHP), 143-163 (LWSL…LLVF), 173-193 (LLKI…ILYV), 212-232 (LLSG…PVVP), 237-257 (AVLN…TAFV), 267-287 (GGLL…SHPA), 307-327 (YGIY…LEIT), 334-354 (AILQ…FIET), and 387-407 (IAGV…VLSV). The tract at residues 412-467 (EKQQTSVKTTTSTPDEKKDDKKEDKATKDKEADSNKASEQKETQKPDNKNKSAATP) is disordered. Positions 413–424 (KQQTSVKTTTST) are enriched in low complexity. A compositionally biased stretch (basic and acidic residues) spans 425–461 (PDEKKDDKKEDKATKDKEADSNKASEQKETQKPDNKN). Active-site residues include S480, D600, and H603.

The protein belongs to the acyltransferase 3 family.

It localises to the cell membrane. It is found in the secreted. The protein resides in the cell wall. Responsible for O-acetylation at the C6-hydroxyl group of N-acetylmuramyl residues, forming the corresponding N,6-O-diacetylmuramic acid of the peptidoglycan. O-acetylation of the peptidoglycan is the major determinant for lysozyme resistance. Critical for virulence and escape from innate immune response of the host. Involved at both early and later stages of listeriosis in the mouse model of infection. Required for successful host colonization and for intracellular survival of bacteria in macrophages of the infected host. Controls the production of inflammatory mediators in the liver of the infected host. Confers resistance to host antimicrobial molecules and to cell wall-targeting molecules such as beta-lactam antibiotics and bacteriocins. The protein is Peptidoglycan O-acetyltransferase OatA of Listeria monocytogenes serovar 1/2a (strain ATCC BAA-679 / EGD-e).